The sequence spans 469 residues: Programmed cell death protein 4 (469 aa).

M1 bears the N-acetylmethionine mark. Disordered stretches follow at residues M1–N38 and K58–G128. A Phosphoserine modification is found at S25. Positions K58–R64 match the Nuclear localization signal motif. S67 bears the Phosphoserine; by PKB and RPS6KB1 mark. A phosphoserine mark is found at S68, S71, S76, S78, S80, and S94. The short motif at D70–S76 is the Phosphodegron element. Residues G74 to D83 are compositionally biased toward low complexity. Residues K114 to G125 show a composition bias toward gly residues. A Phosphotyrosine modification is found at Y152. Residues A163–G284 enclose the MI 1 domain. The Nuclear localization signal signature appears at D241–L250. Residues S313 and S317 each carry the phosphoserine modification. In terms of domain architecture, MI 2 spans H326–S449. S457 carries the phosphoserine; by PKB modification.

It belongs to the PDCD4 family. In terms of assembly, interacts (via MI domains) with EIF4A2. Interacts (via MI domains) with EIF4A1 (via N-terminal domain). Heterotrimer with EIF4A1; one molecule of PDCD4 binds two molecules of EIF4A1. Interacts with EIF4G1. May form a complex with EIF4A1 and EIF4G1. The interaction between PDCD4 and EIF4A1 interferes with the interaction between EIF4A1 and EIF4G. When phosphorylated, interacts with BTRC and FBXW11. Polyubiquitinated, leading to its proteasomal degradation. Rapidly degraded in response to mitogens. Phosphorylation of the phosphodegron promotes interaction with BTRC and proteasomal degradation. Post-translationally, phosphorylated at Ser-67 by RPS6KB1 in response to mitogens; phosphorylation promotes proteasomal degradation of PDCD4. In terms of tissue distribution, up-regulated in proliferative cells. Highly expressed in epithelial cells of the mammary gland. Reduced expression in lung cancer and colon carcinoma.

Its subcellular location is the nucleus. It localises to the cytoplasm. Functionally, inhibits translation initiation and cap-dependent translation. May excert its function by hindering the interaction between EIF4A1 and EIF4G. Inhibits the helicase activity of EIF4A. Modulates the activation of JUN kinase. Down-regulates the expression of MAP4K1, thus inhibiting events important in driving invasion, namely, MAPK85 activation and consequent JUN-dependent transcription. May play a role in apoptosis. Tumor suppressor. Inhibits tumor promoter-induced neoplastic transformation. Binds RNA. The chain is Programmed cell death protein 4 (PDCD4) from Homo sapiens (Human).